The sequence spans 790 residues: Cadherin-6 (790 aa).

Positions 1 to 18 (MRTYRYFLLLFWVGQPYP) are cleaved as a signal peptide. A propeptide spanning residues 19 to 53 (TLSTPLSKRTSGFPAKKRALELSGNSKNELNRSKR) is cleaved from the precursor. A glycan (N-linked (GlcNAc...) asparagine) is linked at asparagine 49. 5 Cadherin domains span residues 54–159 (SWMW…EPIF), 160–268 (TKEV…PPRF), 269–383 (PQST…PPVF), 384–486 (SKLA…DNAP), and 487–608 (EFAE…LIHP). Residues 54–615 (SWMWNQFFLL…IHPTGLSTGA (562 aa)) are Extracellular-facing. An N-linked (GlcNAc...) asparagine glycan is attached at asparagine 255. Residues 259–288 (TDVNDNPPRFPQSTYQFKTPESSPPGTPIG) are disordered. Residues 269–279 (PQSTYQFKTPE) are compositionally biased toward polar residues. N-linked (GlcNAc...) asparagine glycans are attached at residues asparagine 399, asparagine 437, asparagine 455, and asparagine 536. A helical membrane pass occupies residues 616–636 (LVAILLCIVILLVTVVLFAAL). Topologically, residues 637-790 (RRQRKKEPLI…YGGVDSDKDS (154 aa)) are cytoplasmic. Phosphoserine occurs at positions 786 and 790.

In terms of tissue distribution, highly expressed in brain, cerebellum, and kidney. Lung, pancreas, and gastric mucosa show a weak expression. Also expressed in certain liver and kidney carcinomas.

It is found in the cell membrane. Functionally, cadherins are calcium-dependent cell adhesion proteins. They preferentially interact with themselves in a homophilic manner in connecting cells; cadherins may thus contribute to the sorting of heterogeneous cell types. The chain is Cadherin-6 (CDH6) from Homo sapiens (Human).